The primary structure comprises 608 residues: Chaperone protein HtpG (608 aa).

Positions 1–332 (MQFQTEVNQL…VEDLPLNVSR (332 aa)) are a; substrate-binding. The tract at residues 333–536 (EILQENQILK…KNKLDFAMQQ (204 aa)) is b. Residues 537-608 (LLKQMGQEQN…LTKIINKAFS (72 aa)) are c.

Belongs to the heat shock protein 90 family. In terms of assembly, homodimer.

The protein resides in the cytoplasm. Molecular chaperone. Has ATPase activity. The protein is Chaperone protein HtpG of Campylobacter jejuni subsp. doylei (strain ATCC BAA-1458 / RM4099 / 269.97).